A 133-amino-acid polypeptide reads, in one-letter code: Large ribosomal subunit protein eL14 (133 aa).

Belongs to the eukaryotic ribosomal protein eL14 family.

The protein is Large ribosomal subunit protein eL14 of Pisum sativum (Garden pea).